A 483-amino-acid chain; its full sequence is Zinc metalloproteinase/disintegrin (483 aa).

Positions 1-20 (MIQVLLVTICLAVFPYQGSS) are cleaved as a signal peptide. Residues 21 to 190 (IILESGNVND…KASQLYLTPE (170 aa)) constitute a propeptide that is removed on maturation. One can recognise a Peptidase M12B domain in the interval 197–395 (RYIELAIVVD…RNPQCILNAP (199 aa)). E200 provides a ligand contact to Ca(2+). N-linked (GlcNAc...) asparagine glycosylation occurs at N263. D284 contacts Ca(2+). Residue N293 is glycosylated (N-linked (GlcNAc...) asparagine). Cystine bridges form between C308-C390, C352-C374, and C354-C357. Position 333 (H333) interacts with Zn(2+). The active site involves E334. Residues H337 and H343 each coordinate Zn(2+). Ca(2+)-binding residues include C390 and N393. A propeptide spanning residues 396-413 (LRTDTVSTPVSGNEFLEA) is cleaved from the precursor. In terms of domain architecture, Disintegrin spans 403–483 (TPVSGNEFLE…SNDCPRWNDL (81 aa)). 6 disulfides stabilise this stretch: C417/C432, C419/C427, C426/C449, C440/C446, C445/C470, and C458/C477. Positions 462-464 (RGD) match the Cell attachment site motif.

Belongs to the venom metalloproteinase (M12B) family. P-II subfamily. P-IIa sub-subfamily. As to quaternary structure, monomeric (disintegrin). The cofactor is Zn(2+). As to expression, expressed by the venom gland.

The protein localises to the secreted. In terms of biological role, impairs hemostasis in the envenomed animal. Its function is as follows. Inhibits platelet aggregation induced by ADP, thrombin, platelet-activating factor and collagen. Acts by inhibiting fibrinogen interaction with platelet receptors GPIIb/GPIIIa (ITGA2B/ITGB3). The polypeptide is Zinc metalloproteinase/disintegrin (Protobothrops flavoviridis (Habu)).